A 742-amino-acid polypeptide reads, in one-letter code: 5-methyltetrahydropteroyltriglutamate--homocysteine methyltransferase (742 aa).

5-methyltetrahydropteroyltri-L-glutamate is bound by residues 18-21 and Lys112; that span reads REWK. L-homocysteine-binding positions include 420-422 and Glu473; that span reads IGS. L-methionine contacts are provided by residues 420–422 and Glu473; that span reads IGS. Residue Trp550 participates in 5-methyltetrahydropteroyltri-L-glutamate binding. Asp588 provides a ligand contact to L-homocysteine. Asp588 contributes to the L-methionine binding site. Glu594 contributes to the 5-methyltetrahydropteroyltri-L-glutamate binding site. 3 residues coordinate Zn(2+): His630, Cys632, and Glu654. His683 (proton donor) is an active-site residue. Cys715 contacts Zn(2+).

This sequence belongs to the vitamin-B12 independent methionine synthase family. The cofactor is Zn(2+).

The enzyme catalyses 5-methyltetrahydropteroyltri-L-glutamate + L-homocysteine = tetrahydropteroyltri-L-glutamate + L-methionine. The protein operates within amino-acid biosynthesis; L-methionine biosynthesis via de novo pathway; L-methionine from L-homocysteine (MetE route): step 1/1. Its function is as follows. Catalyzes the transfer of a methyl group from 5-methyltetrahydrofolate to homocysteine resulting in methionine formation. The sequence is that of 5-methyltetrahydropteroyltriglutamate--homocysteine methyltransferase from Staphylococcus aureus (strain bovine RF122 / ET3-1).